Consider the following 149-residue polypeptide: Cytochrome c-555 (149 aa).

The signal sequence occupies residues 1–20; that stretch reads MKRTMIVVTTLLLGAGAVMA. Met-32, Cys-137, Cys-140, and His-141 together coordinate heme c.

In terms of assembly, monomer. Post-translationally, binds 1 heme c group covalently per subunit.

The protein localises to the periplasm. Functionally, low-spin monoheme cytochrome. This is Cytochrome c-555 (cycC) from Bradyrhizobium diazoefficiens (strain JCM 10833 / BCRC 13528 / IAM 13628 / NBRC 14792 / USDA 110).